A 224-amino-acid chain; its full sequence is Flagellar L-ring protein (224 aa).

The signal sequence occupies residues 1–15 (MARYFILAVALLLTA). The N-palmitoyl cysteine moiety is linked to residue C16. C16 carries the S-diacylglycerol cysteine lipid modification.

Belongs to the FlgH family. In terms of assembly, the basal body constitutes a major portion of the flagellar organelle and consists of four rings (L,P,S, and M) mounted on a central rod.

The protein resides in the cell outer membrane. The protein localises to the bacterial flagellum basal body. Assembles around the rod to form the L-ring and probably protects the motor/basal body from shearing forces during rotation. The chain is Flagellar L-ring protein from Shewanella sp. (strain MR-7).